Reading from the N-terminus, the 457-residue chain is Phosphomethylpyrimidine synthase (457 aa).

Substrate is bound by residues N88, M117, Y146, H182, 204–206 (SRG), 245–248 (DACR), and E284. H288 is a Zn(2+) binding site. Y311 provides a ligand contact to substrate. H352 serves as a coordination point for Zn(2+). C428, C431, and C435 together coordinate [4Fe-4S] cluster.

It belongs to the ThiC family. [4Fe-4S] cluster serves as cofactor.

It carries out the reaction 5-amino-1-(5-phospho-beta-D-ribosyl)imidazole + S-adenosyl-L-methionine = 4-amino-2-methyl-5-(phosphooxymethyl)pyrimidine + CO + 5'-deoxyadenosine + formate + L-methionine + 3 H(+). The protein operates within cofactor biosynthesis; thiamine diphosphate biosynthesis. In terms of biological role, catalyzes the synthesis of the hydroxymethylpyrimidine phosphate (HMP-P) moiety of thiamine from aminoimidazole ribotide (AIR) in a radical S-adenosyl-L-methionine (SAM)-dependent reaction. The protein is Phosphomethylpyrimidine synthase of Clostridium tetani (strain Massachusetts / E88).